Here is a 636-residue protein sequence, read N- to C-terminus: Probable potassium transport system protein Kup (636 aa).

12 helical membrane-spanning segments follow: residues 23 to 43, 63 to 83, 114 to 134, 150 to 170, 182 to 202, 217 to 237, 260 to 280, 298 to 318, 350 to 370, 379 to 399, 407 to 427, and 432 to 452; these read LVIG…LYSL, IISL…VVFV, VLMM…VITP, PQLS…LFLI, FGPV…YNLV, ISFL…VFLV, WFVL…AMLL, LLIP…QAVI, IYLP…VISF, AYGI…AVVM, PALV…FFAA, and VAEG…LLMT.

This sequence belongs to the HAK/KUP transporter (TC 2.A.72) family.

It is found in the cell inner membrane. It catalyses the reaction K(+)(in) + H(+)(in) = K(+)(out) + H(+)(out). In terms of biological role, transport of potassium into the cell. Likely operates as a K(+):H(+) symporter. In Cupriavidus pinatubonensis (strain JMP 134 / LMG 1197) (Cupriavidus necator (strain JMP 134)), this protein is Probable potassium transport system protein Kup.